The sequence spans 730 residues: Matrix metalloproteinase-9 (730 aa).

A signal peptide spans 1–19; sequence MSPWQPLLLALLAFGCSSA. Residues 20–107 constitute a propeptide, activation peptide; sequence APYQRQPTFV…PRCGVPDVGR (88 aa). A glycan (N-linked (GlcNAc...) asparagine) is linked at Asn-39. The Cysteine switch signature appears at 98-105; sequence PRCGVPDV. Position 100 (Cys-100) interacts with Zn(2+). Residues Asn-120 and Asn-127 are each glycosylated (N-linked (GlcNAc...) asparagine). 2 residues coordinate Ca(2+): Asp-131 and Asp-165. Residues His-175 and Asp-177 each contribute to the Zn(2+) site. Ca(2+) contacts are provided by Asp-182, Gly-183, Asp-185, and Leu-187. Residue His-190 coordinates Zn(2+). Residues Gly-197, Gln-199, and Asp-201 each contribute to the Ca(2+) site. A Zn(2+)-binding site is contributed by His-203. 3 residues coordinate Ca(2+): Asp-205, Asp-206, and Glu-208. Fibronectin type-II domains are found at residues 225-273, 283-331, and 342-390; these read SNGA…FCPS, GEGK…FCPT, and SAGE…FCPD. Cystine bridges form between Cys-230–Cys-256, Cys-244–Cys-271, Cys-288–Cys-314, Cys-302–Cys-329, Cys-347–Cys-373, and Cys-361–Cys-388. Residue His-401 participates in Zn(2+) binding. Residue Glu-402 is part of the active site. Positions 405 and 411 each coordinate Zn(2+). Residues 442–529 form a disordered region; the sequence is LYGRGSKPDP…SEASTESLSP (88 aa). A compositionally biased stretch (pro residues) spans 463-477; it reads PTAPPTMCPTIPPTA. Residues 478–489 are compositionally biased toward low complexity; sequence YPTVGPTVGPTG. Residues 490–514 show a composition bias toward pro residues; it reads APSPGPTSSPSPGPTGAPSPGPTAP. Cys-534 and Cys-729 are joined by a disulfide. Hemopexin repeat units lie at residues 536 to 581, 582 to 626, 628 to 675, and 676 to 729; these read VDVF…WPAL, PATL…GLGP, VTHV…FSGV, and PWNS…LLQC.

The protein belongs to the peptidase M10A family. Exists as monomer or homodimer; disulfide-linked. Also exists as heterodimer with LCN2. Macrophages and transformed cell lines produce only the monomeric form. Interacts with ECM1. Zn(2+) serves as cofactor. The cofactor is Ca(2+). In terms of processing, N- and O-glycosylated.

Its subcellular location is the secreted. The protein localises to the extracellular space. It localises to the extracellular matrix. It carries out the reaction Cleavage of gelatin types I and V and collagen types IV and V.. With respect to regulation, inhibited by histatin-3 1/24 (histatin-5). Inhibited by ECM1. Its function is as follows. Matrix metalloproteinase that plays an essential role in local proteolysis of the extracellular matrix and in leukocyte migration. Could play a role in bone osteoclastic resorption. Cleaves KiSS1 at a Gly-|-Leu bond. Cleaves NINJ1 to generate the Secreted ninjurin-1 form. Cleaves type IV and type V collagen into large C-terminal three quarter fragments and shorter N-terminal one quarter fragments. Degrades fibronectin but not laminin or Pz-peptide. The sequence is that of Matrix metalloproteinase-9 (Mmp9) from Mus musculus (Mouse).